Here is a 431-residue protein sequence, read N- to C-terminus: UDP-N-acetylglucosamine 1-carboxyvinyltransferase (431 aa).

Phosphoenolpyruvate is bound at residue 22 to 23 (KN). Arg-102 lines the UDP-N-acetyl-alpha-D-glucosamine pocket. The active-site Proton donor is the Cys-126. 2-(S-cysteinyl)pyruvic acid O-phosphothioketal is present on Cys-126. Residues Asp-318 and Ile-340 each contribute to the UDP-N-acetyl-alpha-D-glucosamine site.

Belongs to the EPSP synthase family. MurA subfamily.

The protein localises to the cytoplasm. It catalyses the reaction phosphoenolpyruvate + UDP-N-acetyl-alpha-D-glucosamine = UDP-N-acetyl-3-O-(1-carboxyvinyl)-alpha-D-glucosamine + phosphate. It functions in the pathway cell wall biogenesis; peptidoglycan biosynthesis. Its function is as follows. Cell wall formation. Adds enolpyruvyl to UDP-N-acetylglucosamine. In Bartonella tribocorum (strain CIP 105476 / IBS 506), this protein is UDP-N-acetylglucosamine 1-carboxyvinyltransferase.